Here is a 427-residue protein sequence, read N- to C-terminus: UBX domain-containing protein 10 (427 aa).

A coiled-coil region spans residues Leu-247–Ala-311. In terms of domain architecture, UBX spans Ser-323–Leu-425.

It is found in the endoplasmic reticulum. Involved in protein degradation through the ubiquitin/proteasome pathway. The polypeptide is UBX domain-containing protein 10 (ucp10) (Schizosaccharomyces pombe (strain 972 / ATCC 24843) (Fission yeast)).